Here is a 1820-residue protein sequence, read N- to C-terminus: Kinesin-like protein KIF20B (1820 aa).

The Kinesin motor domain occupies 58–479 (YLQVCLRIRP…LKFSAIAQKV (422 aa)). 152-159 (GLTNSGKT) contacts ATP. Serine 488 carries the phosphoserine modification. 2 coiled-coil regions span residues 523–603 (ENSL…KIRE) and 674–793 (GFED…MENT). Threonine 560 is subject to Phosphothreonine. A disordered region spans residues 829–866 (SERKRVNENELQQDEPPAKKGSIHVSSAITEDQKKSEE). Serine 997 is modified (phosphoserine). The necessary and sufficient for interaction with SHTN1 stretch occupies residues 1050–1107 (ENSFHSSIEAIWEECKEIVKASSKKSHQIEELEQQIEKLQAEVKGYKDENNRLKEKEH). Residues 1247 to 1264 (EEEEETNRQETEKLKEEL) are compositionally biased toward basic and acidic residues. Residues 1247-1275 (EEEEETNRQETEKLKEELSASSARTQNLK) are disordered. Residues 1265-1274 (SASSARTQNL) show a composition bias toward polar residues. The interaction with PIN1 stretch occupies residues 1560–1820 (IETQIMDIKP…KRRLRTKTAK (261 aa)). Position 1588 is a phosphoserine (serine 1588). Threonine 1644 is modified (phosphothreonine; by CDK1). Phosphoserine is present on residues serine 1658, serine 1715, and serine 1740. Over residues 1760–1772 (LSNVEASKENVSQ) the composition is skewed to polar residues. Positions 1760–1781 (LSNVEASKENVSQPKRAKRKLY) are disordered.

Belongs to the TRAFAC class myosin-kinesin ATPase superfamily. Kinesin family. In terms of assembly, oligomerizes (via kinesin motor domain). Associates with microtubules. Interacts (via C-terminal globular tail region) with PIN1 (via WW domain). Interacts with PRC1. Interacts with SHTN1 (via N-terminus); the interaction is direct and promotes the association of SHTN1 to microtubules in primary neurons. Phosphorylated during mitosis by CDK1. Brain, ovary, kidney and testis (at protein level). Overexpressed in bladder cancer cells (at protein level). Expressed in testis. Overexpressed in bladder cancer cells.

It localises to the nucleus. It is found in the cytoplasm. The protein localises to the cytoskeleton. Its subcellular location is the microtubule organizing center. The protein resides in the centrosome. It localises to the nucleolus. It is found in the nucleoplasm. The protein localises to the spindle. Its subcellular location is the spindle pole. The protein resides in the midbody. It localises to the cell projection. It is found in the axon. The protein localises to the growth cone. In terms of biological role, plus-end-directed motor enzyme that is required for completion of cytokinesis. Required for proper midbody organization and abscission in polarized cortical stem cells. Plays a role in the regulation of neuronal polarization by mediating the transport of specific cargos. Participates in the mobilization of SHTN1 and in the accumulation of PIP3 in the growth cone of primary hippocampal neurons in a tubulin and actin-dependent manner. In the developing telencephalon, cooperates with SHTN1 to promote both the transition from the multipolar to the bipolar stage and the radial migration of cortical neurons from the ventricular zone toward the superficial layer of the neocortex. Involved in cerebral cortex growth. Acts as an oncogene for promoting bladder cancer cells proliferation, apoptosis inhibition and carcinogenic progression. This Homo sapiens (Human) protein is Kinesin-like protein KIF20B.